Consider the following 501-residue polypeptide: ATP synthase subunit alpha (501 aa).

ATP is bound at residue 169–176 (GDRQTGKT).

The protein belongs to the ATPase alpha/beta chains family. As to quaternary structure, F-type ATPases have 2 components, CF(1) - the catalytic core - and CF(0) - the membrane proton channel. CF(1) has five subunits: alpha(3), beta(3), gamma(1), delta(1), epsilon(1). CF(0) has three main subunits: a(1), b(2) and c(9-12). The alpha and beta chains form an alternating ring which encloses part of the gamma chain. CF(1) is attached to CF(0) by a central stalk formed by the gamma and epsilon chains, while a peripheral stalk is formed by the delta and b chains.

It localises to the cell membrane. The catalysed reaction is ATP + H2O + 4 H(+)(in) = ADP + phosphate + 5 H(+)(out). Produces ATP from ADP in the presence of a proton gradient across the membrane. The alpha chain is a regulatory subunit. This chain is ATP synthase subunit alpha, found in Streptococcus agalactiae serotype III (strain NEM316).